Here is a 579-residue protein sequence, read N- to C-terminus: Keratinocyte proline-rich protein (579 aa).

S394 bears the Phosphoserine mark. Residues 526–579 form a disordered region; it reads EAPYCGPSSYNQGQESGAGCGPGDVFPERRGQDGHGDQGNAFAGVKGEAKSAYF. The span at 551-561 shows a compositional bias: basic and acidic residues; that stretch reads FPERRGQDGHG.

In terms of tissue distribution, expressed in the upper layer of epidermis and psoriasis (at protein level). Expressed in the upper layer of epidermis and psoriasis.

Its subcellular location is the cytoplasm. The protein is Keratinocyte proline-rich protein (KPRP) of Homo sapiens (Human).